A 240-amino-acid polypeptide reads, in one-letter code: Methylthioribulose-1-phosphate dehydratase (240 aa).

Cys99 contributes to the substrate binding site. The Zn(2+) site is built by His116 and His118. Glu145 acts as the Proton donor/acceptor in catalysis. His201 contributes to the Zn(2+) binding site.

The protein belongs to the aldolase class II family. MtnB subfamily. Zn(2+) serves as cofactor.

The protein localises to the cytoplasm. The catalysed reaction is 5-(methylsulfanyl)-D-ribulose 1-phosphate = 5-methylsulfanyl-2,3-dioxopentyl phosphate + H2O. It functions in the pathway amino-acid biosynthesis; L-methionine biosynthesis via salvage pathway; L-methionine from S-methyl-5-thio-alpha-D-ribose 1-phosphate: step 2/6. In terms of biological role, catalyzes the dehydration of methylthioribulose-1-phosphate (MTRu-1-P) into 2,3-diketo-5-methylthiopentyl-1-phosphate (DK-MTP-1-P). The chain is Methylthioribulose-1-phosphate dehydratase from Ajellomyces capsulatus (strain G186AR / H82 / ATCC MYA-2454 / RMSCC 2432) (Darling's disease fungus).